Consider the following 63-residue polypeptide: ComG operon repressor (63 aa).

Functionally, negatively regulates the transcription of the comG operon. This Bacillus subtilis (strain 168) protein is ComG operon repressor (comZ).